The primary structure comprises 41 residues: SDRASDGRNAAANDRASDLVALTVRGCCTYPPCAVLSPLCD.

Positions 1-25 (SDRASDGRNAAANDRASDLVALTVR) are excised as a propeptide. Intrachain disulfides connect C27/C33 and C28/C40.

It belongs to the conotoxin A superfamily. Expressed by the venom duct.

It localises to the secreted. This is Conotoxin Bu22 from Conus bullatus (Bubble cone).